Consider the following 612-residue polypeptide: Dihydroxy-acid dehydratase (612 aa).

Aspartate 81 provides a ligand contact to Mg(2+). Cysteine 122 is a [2Fe-2S] cluster binding site. The Mg(2+) site is built by aspartate 123 and lysine 124. The residue at position 124 (lysine 124) is an N6-carboxylysine. A [2Fe-2S] cluster-binding site is contributed by cysteine 196. Residue glutamate 492 participates in Mg(2+) binding. Serine 518 serves as the catalytic Proton acceptor.

Belongs to the IlvD/Edd family. As to quaternary structure, homodimer. [2Fe-2S] cluster is required as a cofactor. The cofactor is Mg(2+).

The catalysed reaction is (2R)-2,3-dihydroxy-3-methylbutanoate = 3-methyl-2-oxobutanoate + H2O. The enzyme catalyses (2R,3R)-2,3-dihydroxy-3-methylpentanoate = (S)-3-methyl-2-oxopentanoate + H2O. It participates in amino-acid biosynthesis; L-isoleucine biosynthesis; L-isoleucine from 2-oxobutanoate: step 3/4. It functions in the pathway amino-acid biosynthesis; L-valine biosynthesis; L-valine from pyruvate: step 3/4. Functionally, functions in the biosynthesis of branched-chain amino acids. Catalyzes the dehydration of (2R,3R)-2,3-dihydroxy-3-methylpentanoate (2,3-dihydroxy-3-methylvalerate) into 2-oxo-3-methylpentanoate (2-oxo-3-methylvalerate) and of (2R)-2,3-dihydroxy-3-methylbutanoate (2,3-dihydroxyisovalerate) into 2-oxo-3-methylbutanoate (2-oxoisovalerate), the penultimate precursor to L-isoleucine and L-valine, respectively. In Paracoccus denitrificans (strain Pd 1222), this protein is Dihydroxy-acid dehydratase.